A 968-amino-acid polypeptide reads, in one-letter code: uncharacterized protein (968 aa).

Disordered regions lie at residues 124-177 (SSIS…FSFP), 348-437 (QEDS…VNDS), 572-595 (TTTTTITQQQQQQQQQQQQQQQNT), 608-627 (PKASNKLANNSNGKKVGSSK), and 837-877 (KASK…KKGK). A compositionally biased stretch (polar residues) spans 131-157 (TIESNYLSNPSSPCQSTPILESSTPFS). 3 stretches are compositionally biased toward low complexity: residues 158-177 (QKLMSNEQQQQQQPQNFSFP), 352-431 (NNNN…NCNN), and 572-593 (TTTTTITQQQQQQQQQQQQQQQ). Residues 841–857 (DSSSSPTASSAAPGDSS) show a composition bias toward low complexity.

This is an uncharacterized protein from Dictyostelium discoideum (Social amoeba).